The primary structure comprises 624 residues: Adhesion and hyphal regulator 1 (624 aa).

The zn(2)-C6 fungal-type DNA-binding region spans 19–46; it reads CVTCRDRHIKCDEQQPVCKNCQKSNRKC. Disordered regions lie at residues 63 to 84 and 230 to 250; these read DDNK…YAFP and PQHH…TDPN. A compositionally biased stretch (polar residues) spans 237–250; it reads DTSQHQETTSTDPN.

As to quaternary structure, interacts with MCM1.

It localises to the nucleus. Functionally, transcription factor that binds the promoters of genes involved in biofilm formation, which include several key adhesion genes, and recruits MCM1 to these sites. Plays an important role in hyphal growth and virulence. Promotes conversion of opaque cells to white phase, but needs existence of EFG1, a key regulator required for maintenance of the white state. This chain is Adhesion and hyphal regulator 1 (AHR1), found in Candida albicans (strain SC5314 / ATCC MYA-2876) (Yeast).